The following is a 483-amino-acid chain: Glycogen synthase (483 aa).

An ADP-alpha-D-glucose-binding site is contributed by Lys15.

It belongs to the glycosyltransferase 1 family. Bacterial/plant glycogen synthase subfamily.

The enzyme catalyses [(1-&gt;4)-alpha-D-glucosyl](n) + ADP-alpha-D-glucose = [(1-&gt;4)-alpha-D-glucosyl](n+1) + ADP + H(+). It participates in glycan biosynthesis; glycogen biosynthesis. Synthesizes alpha-1,4-glucan chains using ADP-glucose. This Alkalilimnicola ehrlichii (strain ATCC BAA-1101 / DSM 17681 / MLHE-1) protein is Glycogen synthase.